A 360-amino-acid chain; its full sequence is DNA integrity scanning protein DisA (360 aa).

The 139-residue stretch at 11-149 (ELDLSSILQF…ENMKYTLKDI (139 aa)) folds into the DAC domain. ATP is bound by residues Gly-78, Leu-96, and 109–113 (MRHRT).

The protein belongs to the DisA family. In terms of assembly, homooligomer. Interacts with RadA. The cofactor is Mg(2+).

It localises to the cytoplasm. The enzyme catalyses 2 ATP = 3',3'-c-di-AMP + 2 diphosphate. Its activity is regulated as follows. Diadenylate cyclase (DAC) activity is inhibited 2-fold by Holliday junction (HJ) DNA, further addition of RecG inhibits DAC activity 11-fold; RecG may relocate DisA from the HJ. DAC is inhibited by the interaction with RadA. Diadenylate cyclase activity is not affected by ssDNA or dsDNA, but three- and four-way junctions strongly inhibit the activity of DisA, suggesting the enzyme is regulated by branched nucleic acids. Its function is as follows. Participates in a DNA-damage check-point that is active prior to asymmetric division when DNA is damaged. Forms globular foci that rapidly scan along the chromosomes during sporulation, searching for lesions. Its ability to scan through the chromosome rapidly is due to its non-specific DNA-binding. When a lesion is present, DisA pauses at the lesion site. This triggers a cellular response that culminates in a temporary block in sporulation initiation. It is required, at least partially, to inhibit the activity of the transcription factor spo0A, which controls, among others, early sporulation genes. In B.subtilis c-di-AMP is a second messenger that mediates growth, DNA repair and cell wall homeostasis; it is toxic when present in excess. Limits the replication fork reggression activity of RecG; DisA inhibits the ATPase activity of RecG. By limiting RecG-mediated fork regression, DisA provides time for removal of potentially lethal DNA lesions. In terms of biological role, one of 3 paralogous diadenylate cyclases (DAC) in this bacteria. Has diadenylate cyclase activity, catalyzing the condensation of 2 ATP molecules into cyclic di-AMP (c-di-AMP). c-di-AMP acts as a signaling molecule that couples DNA integrity with progression of sporulation. The rise in c-di-AMP level generated by DisA while scanning the chromosome operates as a positive signal that advances sporulation; upon encountering a lesion, the DisA focus arrests at the damaged site and halts c-di-AMP synthesis. Does not convert GTP to c-di-GMP. The polypeptide is DNA integrity scanning protein DisA (Bacillus subtilis (strain 168)).